Here is a 435-residue protein sequence, read N- to C-terminus: Serine--tRNA ligase (435 aa).

241–243 (TAE) serves as a coordination point for L-serine. Residue 272 to 274 (RSE) coordinates ATP. Residue Glu295 participates in L-serine binding. 359–362 (EISS) is a binding site for ATP. L-serine is bound at residue Ser395.

This sequence belongs to the class-II aminoacyl-tRNA synthetase family. Type-1 seryl-tRNA synthetase subfamily. As to quaternary structure, homodimer. The tRNA molecule binds across the dimer.

It is found in the cytoplasm. The enzyme catalyses tRNA(Ser) + L-serine + ATP = L-seryl-tRNA(Ser) + AMP + diphosphate + H(+). It carries out the reaction tRNA(Sec) + L-serine + ATP = L-seryl-tRNA(Sec) + AMP + diphosphate + H(+). It participates in aminoacyl-tRNA biosynthesis; selenocysteinyl-tRNA(Sec) biosynthesis; L-seryl-tRNA(Sec) from L-serine and tRNA(Sec): step 1/1. Its function is as follows. Catalyzes the attachment of serine to tRNA(Ser). Is also able to aminoacylate tRNA(Sec) with serine, to form the misacylated tRNA L-seryl-tRNA(Sec), which will be further converted into selenocysteinyl-tRNA(Sec). This chain is Serine--tRNA ligase, found in Actinobacillus pleuropneumoniae serotype 5b (strain L20).